Here is a 500-residue protein sequence, read N- to C-terminus: Aspartyl/glutamyl-tRNA(Asn/Gln) amidotransferase subunit B (500 aa).

It belongs to the GatB/GatE family. GatB subfamily. In terms of assembly, heterotrimer of A, B and C subunits.

It catalyses the reaction L-glutamyl-tRNA(Gln) + L-glutamine + ATP + H2O = L-glutaminyl-tRNA(Gln) + L-glutamate + ADP + phosphate + H(+). It carries out the reaction L-aspartyl-tRNA(Asn) + L-glutamine + ATP + H2O = L-asparaginyl-tRNA(Asn) + L-glutamate + ADP + phosphate + 2 H(+). In terms of biological role, allows the formation of correctly charged Asn-tRNA(Asn) or Gln-tRNA(Gln) through the transamidation of misacylated Asp-tRNA(Asn) or Glu-tRNA(Gln) in organisms which lack either or both of asparaginyl-tRNA or glutaminyl-tRNA synthetases. The reaction takes place in the presence of glutamine and ATP through an activated phospho-Asp-tRNA(Asn) or phospho-Glu-tRNA(Gln). This is Aspartyl/glutamyl-tRNA(Asn/Gln) amidotransferase subunit B from Sinorhizobium fredii (strain NBRC 101917 / NGR234).